Here is a 135-residue protein sequence, read N- to C-terminus: Cytochrome c oxidase subunit 2 (135 aa).

His-81, Cys-116, Cys-120, and His-124 together coordinate Cu cation.

It belongs to the cytochrome c oxidase subunit 2 family.

The protein resides in the cell membrane. The catalysed reaction is 4 Fe(II)-[cytochrome c] + O2 + 8 H(+)(in) = 4 Fe(III)-[cytochrome c] + 2 H2O + 4 H(+)(out). Functionally, subunits I and II form the functional core of the enzyme complex. Electrons originating in cytochrome c are transferred via heme a and Cu(A) to the binuclear center formed by heme a3 and Cu(B). This Thermus thermophilus protein is Cytochrome c oxidase subunit 2 (cbaB).